The sequence spans 130 residues: Small ribosomal subunit protein uS11 (130 aa).

Belongs to the universal ribosomal protein uS11 family. In terms of assembly, part of the 30S ribosomal subunit. Interacts with proteins S7 and S18. Binds to IF-3.

Its function is as follows. Located on the platform of the 30S subunit, it bridges several disparate RNA helices of the 16S rRNA. Forms part of the Shine-Dalgarno cleft in the 70S ribosome. This chain is Small ribosomal subunit protein uS11, found in Gloeothece citriformis (strain PCC 7424) (Cyanothece sp. (strain PCC 7424)).